The chain runs to 87 residues: Cytochrome c6 (87 aa).

Residues Cys10, Cys13, His14, and Met56 each coordinate heme c.

The protein belongs to the cytochrome c family. PetJ subfamily. As to quaternary structure, monomer. In terms of processing, binds 1 heme c group covalently per subunit.

The protein resides in the plastid. Its subcellular location is the chloroplast thylakoid lumen. Functionally, functions as an electron carrier between membrane-bound cytochrome b6-f and photosystem I in oxygenic photosynthesis. This chain is Cytochrome c6 (petJ), found in Euglena viridis (Cercaria viridis).